The sequence spans 302 residues: Riboflavin transporter (302 aa).

8 helical membrane-spanning segments follow: residues 16–36, 44–64, 87–107, 109–129, 158–178, 191–213, 227–247, and 264–284; these read AVVGALWMVLAGIAFSLLNVV, LAFPSASAAFWQYGFAFLFSL, VVLAALGVEAWVAGLAAVPIW, AIALVMTSPFFIILGARLFLG, IGWAALLPVLSALLWGASSLI, ITVWLLVLLTPINGGLALAAGFA, GLLTAVAQYFLTLAYAAADAA, and GWLFFGYAPAGYLWLGAALIL. EamA domains follow at residues 30–151 and 170–291; these read FSLL…MIIL and LLWG…LFIM.

This sequence belongs to the drug/metabolite transporter (DMT) superfamily. 10 TMS drug/metabolite exporter (DME) (TC 2.A.7.3) family.

It is found in the cell membrane. Its function is as follows. Transports riboflavin into the cell. Can also transport FMN and FAD. Required for normal nodule development during colonization of pea plant roots. This chain is Riboflavin transporter, found in Rhizobium johnstonii (strain DSM 114642 / LMG 32736 / 3841) (Rhizobium leguminosarum bv. viciae).